Reading from the N-terminus, the 356-residue chain is Serine/arginine-rich splicing factor RS41 (356 aa).

2 RRM domains span residues 2-74 (KPVF…WTKN) and 96-167 (KTLF…YAVK). The tract at residues 73 to 92 (KNDRGGAGRSGGSRRSSSGL) is disordered. The segment covering 168–186 (DDDSRGNGYSPERRRDRSP) has biased composition (basic and acidic residues). The tract at residues 168-356 (DDDSRGNGYS…SPSRSPPAEE (189 aa)) is disordered. Phosphoserine occurs at positions 192, 194, 210, 239, 254, and 274. Over residues 238–253 (LSPDYKRDDRRRERVA) the composition is skewed to basic and acidic residues. A run of 3 repeats spans residues 267–278 (KGRGESRSPPPY), 279–290 (EKRRESRSPPPY), and 291–302 (EKRRESRSPPPY). Positions 267–307 (KGRGESRSPPPYEKRRESRSPPPYEKRRESRSPPPYEKRRE) are 4 X 12 AA tandem repeats of [KE]-[GK]-R -[GR]-E-S-R-S-P-P-P-Y. The span at 268–306 (GRGESRSPPPYEKRRESRSPPPYEKRRESRSPPPYEKRR) shows a compositional bias: basic and acidic residues. One copy of the 4; truncated repeat lies at 303–307 (EKRRE). Phosphoserine occurs at positions 309, 324, 342, 347, and 351.

This sequence belongs to the splicing factor SR family. RS subfamily. Component of the spliceosome. Interacts with RCF3 and CPL1. Interacts with DRB1/HYL1 and SE. As to expression, leaves, stem, roots and flowers.

The protein localises to the nucleus. It localises to the nucleus speckle. Required for constitutive and alternative pre-mRNA splicing. Involved in primary miRNA processing and pri-miRNA biogenesis. Binds both intronless and intron-containing pri-miRNAs. This Arabidopsis thaliana (Mouse-ear cress) protein is Serine/arginine-rich splicing factor RS41 (RS41).